Here is a 950-residue protein sequence, read N- to C-terminus: Protocadherin alpha-13 (950 aa).

An N-terminal signal peptide occupies residues 1–29 (MLSSWQGGPRPRQLLLWLLILAAWETGSG). The Extracellular portion of the chain corresponds to 30 to 697 (QLHYSVPEEA…GPEAALVDVN (668 aa)). 6 consecutive Cadherin domains span residues 34 to 133 (SVPE…PPIF), 134 to 242 (PESK…APEF), 243 to 350 (YQSV…APEV), 351 to 455 (TITS…APAF), 456 to 565 (AQPE…APAL), and 581 to 678 (MPRS…APQA). Asparagine 257 and asparagine 265 each carry an N-linked (GlcNAc...) asparagine glycan. Asparagine 548 carries N-linked (GlcNAc...) asparagine glycosylation. The chain crosses the membrane as a helical span at residues 698–718 (VYLIIAICAVSSLLVLTLLLY). The Cytoplasmic portion of the chain corresponds to 719–950 (TALRCSAPPT…GNSTTDNSDQ (232 aa)). PXXP repeat units follow at residues 734-737 (PGKP), 774-777 (PSLP), 799-802 (PRQP), 832-835 (PGGP), 873-876 (PGNP), and 891-894 (PGSP). The segment at 734 to 894 (PGKPTLVCSS…PDKFIIPGSP (161 aa)) is 6 X 4 AA repeats of P-X-X-P. Disordered stretches follow at residues 774–808 (PSLP…DWRY) and 827–950 (ILRA…NSDQ). The segment covering 787–800 (GQREEDSEGLKEPR) has biased composition (basic and acidic residues). Over residues 909-923 (DKSDFITFGKKEETK) the composition is skewed to basic and acidic residues.

The protein localises to the cell membrane. Functionally, potential calcium-dependent cell-adhesion protein. May be involved in the establishment and maintenance of specific neuronal connections in the brain. In Pan troglodytes (Chimpanzee), this protein is Protocadherin alpha-13 (PCDHA13).